Here is a 452-residue protein sequence, read N- to C-terminus: MTDHELSESEKAIERYKVKKLIQMLESARGMGTSVISIYMTPKEQISGMVTKLNNEYGTASNIKSHTNKLSVQSAITASLGRLKQYNRLPPNGLLLYCGTVLTAENKEKKLTLDIEPFKPVSRSLYLCDNKFHTEELHRMLESDEKFGFIVVDGSGTTYATLCGSVKEKLSSFTVELPKKHGRGGQSKNRFARIRMERRHNYLRKVAEGATQLFITNDRPNIVGLVLAGSAEFKEVLYQSDLFDPRLKAIVVKVVDVAHPGDVGLNQAIDLAADALSGVKLVQEKKLLQGFFDQIACDTQLYCFGVQDTLKCLEAGAVETLIVYEDLNIYRYTVVKNRGADDEETFVHVMSEEEAKRSNIHMQESGKTRNEIEQEDFVDWLATNYRKFGCALELITNRSQEGTQFVRGFGGIGGVLRYKLDIIALRDVEKKEDDEERIAANNEEFDFDDDFM.

The protein belongs to the eukaryotic release factor 1 family. In terms of assembly, heterodimer of two subunits, one of which binds GTP.

It is found in the cytoplasm. Directs the termination of nascent peptide synthesis (translation) in response to the termination codons UAA, UAG and UGA. The polypeptide is Eukaryotic peptide chain release factor subunit 1 (ERF1) (Trypanosoma brucei brucei).